The sequence spans 799 residues: 1-phosphatidylinositol 4,5-bisphosphate phosphodiesterase delta-4 (799 aa).

A PH domain is found at Leu16–Asp124. The tract at residues Lys26–Ala53 is substrate binding. EF-hand domains follow at residues Arg134–Glu169, Met170–Arg205, and Ala206–Glu237. Ca(2+) contacts are provided by Asp147, Asn149, Asp151, Lys153, Glu158, Asp183, Ser185, Ser187, Thr189, and Glu194. Residues Glu213–Glu243 carry the GBA motif. The region spanning Gln290–Lys435 is the PI-PLC X-box domain. Residue His305 is part of the active site. Asn306, Glu335, and Asp337 together coordinate Ca(2+). Residue His350 is part of the active site. Glu384 contacts Ca(2+). Substrate contacts are provided by Lys433 and Lys435. A Phosphoserine modification is found at Ser460. Positions Leu530–Arg646 constitute a PI-PLC Y-box domain. Residues Ser559 and Arg586 each coordinate substrate. The C2 domain occupies Arg646–Ser773. Ca(2+)-binding residues include Ile687, Asp689, Asn713, Asp742, Tyr743, and Asp744. The short motif at His768–Leu771 is the PDZ-binding element.

As to quaternary structure, interacts with GRIP1. Interacts (via GBA motif) with guanine nucleotide-binding protein G(i) alpha subunit GNAI3 (inactive GDP-bound form); low-affinity interaction. Ca(2+) serves as cofactor.

Its subcellular location is the membrane. It is found in the nucleus. The protein localises to the cytoplasm. It localises to the endoplasmic reticulum. The catalysed reaction is a 1,2-diacyl-sn-glycero-3-phospho-(1D-myo-inositol-4,5-bisphosphate) + H2O = 1D-myo-inositol 1,4,5-trisphosphate + a 1,2-diacyl-sn-glycerol + H(+). It catalyses the reaction a 1,2-diacyl-sn-glycero-3-phospho-(1D-myo-inositol) + H2O = 1D-myo-inositol 1-phosphate + a 1,2-diacyl-sn-glycerol + H(+). In terms of biological role, hydrolyzes the phosphatidylinositol 4,5-bisphosphate (PIP2) to generate 2 second messenger molecules diacylglycerol (DAG) and inositol 1,4,5-trisphosphate (IP3). DAG mediates the activation of protein kinase C (PKC), while IP3 releases Ca(2+) from intracellular stores. Required for acrosome reaction in sperm during fertilization, probably by acting as an important enzyme for intracellular Ca(2+) mobilization in the zona pellucida-induced acrosome reaction. May play a role in cell growth. Modulates the liver regeneration in cooperation with nuclear PKC. Overexpression up-regulates the Erk signaling pathway and proliferation. The protein is 1-phosphatidylinositol 4,5-bisphosphate phosphodiesterase delta-4 (PLCD4) of Macaca fascicularis (Crab-eating macaque).